Consider the following 310-residue polypeptide: Methionyl-tRNA formyltransferase (310 aa).

Position 109–112 (109–112 (SLLP)) interacts with (6S)-5,6,7,8-tetrahydrofolate. The segment at 283–310 (QPQGKKAMPAADWARGARIGDGERFGDD) is disordered. The segment covering 300 to 310 (RIGDGERFGDD) has biased composition (basic and acidic residues).

This sequence belongs to the Fmt family.

It carries out the reaction L-methionyl-tRNA(fMet) + (6R)-10-formyltetrahydrofolate = N-formyl-L-methionyl-tRNA(fMet) + (6S)-5,6,7,8-tetrahydrofolate + H(+). Its function is as follows. Attaches a formyl group to the free amino group of methionyl-tRNA(fMet). The formyl group appears to play a dual role in the initiator identity of N-formylmethionyl-tRNA by promoting its recognition by IF2 and preventing the misappropriation of this tRNA by the elongation apparatus. The polypeptide is Methionyl-tRNA formyltransferase (Thermobifida fusca (strain YX)).